We begin with the raw amino-acid sequence, 343 residues long: Phosphate acyltransferase (343 aa).

Belongs to the PlsX family. In terms of assembly, homodimer. Probably interacts with PlsY.

The protein localises to the cytoplasm. The enzyme catalyses a fatty acyl-[ACP] + phosphate = an acyl phosphate + holo-[ACP]. It participates in lipid metabolism; phospholipid metabolism. In terms of biological role, catalyzes the reversible formation of acyl-phosphate (acyl-PO(4)) from acyl-[acyl-carrier-protein] (acyl-ACP). This enzyme utilizes acyl-ACP as fatty acyl donor, but not acyl-CoA. This chain is Phosphate acyltransferase, found in Halorhodospira halophila (strain DSM 244 / SL1) (Ectothiorhodospira halophila (strain DSM 244 / SL1)).